Reading from the N-terminus, the 270-residue chain is Flagellar hook-basal body complex protein FlhO (270 aa).

The protein belongs to the flagella basal body rod proteins family.

Not required for motility. The sequence is that of Flagellar hook-basal body complex protein FlhO (flhO) from Bacillus subtilis (strain 168).